The sequence spans 97 residues: Large ribosomal subunit protein bL27 (97 aa).

Positions 1 to 12 (MLKMTLNNLQLF) are excised as a propeptide. Positions 13–37 (AHKKGGGSTSNGRDSQAKRLGAKAA) are disordered.

Belongs to the bacterial ribosomal protein bL27 family. The N-terminus is cleaved by ribosomal processing cysteine protease Prp.

This Streptococcus pneumoniae serotype 2 (strain D39 / NCTC 7466) protein is Large ribosomal subunit protein bL27.